The sequence spans 436 residues: UPF0597 protein YhaM (436 aa).

This sequence belongs to the UPF0597 family.

The polypeptide is UPF0597 protein YhaM (Salmonella paratyphi C (strain RKS4594)).